The primary structure comprises 768 residues: Degenerin mec-4 (768 aa).

Over 1 to 109 (MSWMQNLKNY…GEAPNVYYRA (109 aa)) the chain is Cytoplasmic. A helical membrane pass occupies residues 110-130 (VWVMLFLGCMIMLYLNAQSVL). Topologically, residues 131–718 (DKYNRNEKIV…VNLLADFGGQ (588 aa)) are extracellular. 2 disordered regions span residues 187 to 221 (AGGNKEHDGEKEVITEAPTTPAPTTKPSRRRGKRD) and 237 to 260 (GSQGSSEQEDKDDEKEEEMHETTT). The segment covering 189-200 (GNKEHDGEKEVI) has biased composition (basic and acidic residues). Over residues 203–212 (APTTPAPTTK) the composition is skewed to low complexity. Positions 243 to 252 (EQEDKDDEKE) are enriched in acidic residues. N-linked (GlcNAc...) asparagine glycans are attached at residues N336, N357, N480, N484, N503, and N671. The helical transmembrane segment at 719-739 (LGLWCGISFLTCCEFVFLFLE) threads the bilayer. The Cytoplasmic portion of the chain corresponds to 740–768 (TAYMSAEHNYSLYKKKKAEKAKKVASGSF).

Belongs to the amiloride-sensitive sodium channel (TC 1.A.6) family. The channel is probably composed of at least the mec-2, mec-4, mec-6 and mec-10 subunits.

The protein resides in the membrane. Functionally, probable sodium channel subunit. May be needed for mechanosensory transduction (touch sensitivity). Negatively regulates the turning step of male mating behavior. The sequence is that of Degenerin mec-4 (mec-4) from Caenorhabditis briggsae.